Here is a 612-residue protein sequence, read N- to C-terminus: Sulfite reductase [NADPH] hemoprotein beta-component (612 aa).

Residues 1 to 26 (MDDHKPIETPDGPAVDTPGIGARRYE) are disordered. Residues C469, C475, C514, and C518 each coordinate [4Fe-4S] cluster. C518 contributes to the siroheme binding site.

This sequence belongs to the nitrite and sulfite reductase 4Fe-4S domain family. As to quaternary structure, alpha(8)-beta(8). The alpha component is a flavoprotein, the beta component is a hemoprotein. It depends on siroheme as a cofactor. [4Fe-4S] cluster is required as a cofactor.

It carries out the reaction hydrogen sulfide + 3 NADP(+) + 3 H2O = sulfite + 3 NADPH + 4 H(+). It participates in sulfur metabolism; hydrogen sulfide biosynthesis; hydrogen sulfide from sulfite (NADPH route): step 1/1. In terms of biological role, component of the sulfite reductase complex that catalyzes the 6-electron reduction of sulfite to sulfide. This is one of several activities required for the biosynthesis of L-cysteine from sulfate. This is Sulfite reductase [NADPH] hemoprotein beta-component from Methylorubrum extorquens (strain ATCC 14718 / DSM 1338 / JCM 2805 / NCIMB 9133 / AM1) (Methylobacterium extorquens).